Here is a 393-residue protein sequence, read N- to C-terminus: S-adenosylmethionine synthase (393 aa).

His-17 serves as a coordination point for ATP. Asp-19 serves as a coordination point for Mg(2+). Residue Glu-45 coordinates K(+). L-methionine contacts are provided by Glu-58 and Gln-104. Residues 104 to 114 (QSAEIAQGVEE) form a flexible loop region. ATP is bound by residues 171-173 (DAK), Asp-245, 251-252 (RK), Ala-268, and Lys-272. Asp-245 serves as a coordination point for L-methionine. Residue Lys-276 participates in L-methionine binding.

Belongs to the AdoMet synthase family. Homotetramer; dimer of dimers. It depends on Mg(2+) as a cofactor. Requires K(+) as cofactor.

Its subcellular location is the cytoplasm. It carries out the reaction L-methionine + ATP + H2O = S-adenosyl-L-methionine + phosphate + diphosphate. It functions in the pathway amino-acid biosynthesis; S-adenosyl-L-methionine biosynthesis; S-adenosyl-L-methionine from L-methionine: step 1/1. Its function is as follows. Catalyzes the formation of S-adenosylmethionine (AdoMet) from methionine and ATP. The overall synthetic reaction is composed of two sequential steps, AdoMet formation and the subsequent tripolyphosphate hydrolysis which occurs prior to release of AdoMet from the enzyme. In Hyphomonas neptunium (strain ATCC 15444), this protein is S-adenosylmethionine synthase.